Consider the following 220-residue polypeptide: 7-cyano-7-deazaguanine synthase (220 aa).

Residue 7–17 coordinates ATP; the sequence is LSGGMDSSITA. Cys185, Cys193, Cys196, and Cys199 together coordinate Zn(2+).

This sequence belongs to the QueC family. It depends on Zn(2+) as a cofactor.

The enzyme catalyses 7-carboxy-7-deazaguanine + NH4(+) + ATP = 7-cyano-7-deazaguanine + ADP + phosphate + H2O + H(+). It participates in purine metabolism; 7-cyano-7-deazaguanine biosynthesis. In terms of biological role, catalyzes the ATP-dependent conversion of 7-carboxy-7-deazaguanine (CDG) to 7-cyano-7-deazaguanine (preQ(0)). The protein is 7-cyano-7-deazaguanine synthase of Nitratiruptor sp. (strain SB155-2).